The primary structure comprises 119 residues: Protein TusC (119 aa).

This sequence belongs to the DsrF/TusC family. As to quaternary structure, heterohexamer, formed by a dimer of trimers. The hexameric TusBCD complex contains 2 copies each of TusB, TusC and TusD. The TusBCD complex interacts with TusE.

Its subcellular location is the cytoplasm. Functionally, part of a sulfur-relay system required for 2-thiolation of 5-methylaminomethyl-2-thiouridine (mnm(5)s(2)U) at tRNA wobble positions. The chain is Protein TusC from Escherichia coli O127:H6 (strain E2348/69 / EPEC).